An 816-amino-acid polypeptide reads, in one-letter code: Homeobox-leucine zipper protein ROC9 (816 aa).

The tract at residues 26-104 is disordered; that stretch reads VFGRKNGPAA…RRKNYHRHTA (79 aa). A compositionally biased stretch (basic residues) spans 92–101; the sequence is KKRRRKNYHR. A DNA-binding region (homeobox) is located at residues 95–154; sequence RRKNYHRHTAEQIRIMEALFKESPHPDERQRQQVSKQLGLSARQVKFWFQNRRTQIKAVQ. The stretch at 149–182 forms a coiled coil; the sequence is QIKAVQERHENSLLKSELEKLQDEHRAMRELAKK. The tract at residues 265 to 296 is disordered; that stretch reads KSAADGIASPPCSASAGAMQTNSRSPPLHDHD. Residues 302-541 enclose the START domain; it reads HDDDKPRILE…LQLQCERMVF (240 aa).

This sequence belongs to the HD-ZIP homeobox family. Class IV subfamily.

The protein resides in the nucleus. Probable transcription factor. The chain is Homeobox-leucine zipper protein ROC9 (ROC9) from Oryza sativa subsp. japonica (Rice).